The following is a 1070-amino-acid chain: MSPAKRWGSPCLFPLQLFSLCWVLSVAQSKTVRYSTFEEDAPGTVIGTLAEDLHMKVSGDTSFRLMKQFNSSLLRVREGDGQLTVGDAGLDRERLCGPSPQCVLAFDVVSFSQEQFRLVHVEVEVRDVNDHAPRFPRAQIPVEVSESAPVGTRIPLEVPVDEDVGANGLQSVRLAEPHSPFRVELQTRADGAQCADLVLLQELDRESQASYSLELVAQDGGRPPRSATAALSVRVLDANDHSPAFPQGAVAEVELAEDAPVGSLLLDLDAADPDEGPNGDVVFTFGARTPPEARHLFRLDPRSGRLTLAGQVDYERQDTYELDVRAQDRGPGPRTATCKVIVRIRDVNDNAPEISITPLAAPGAPATSPFAAAAAAAALGGADAASSTGSGTQEAGITSLVPEGAARESLVALVSTSDRDSGANGQVRCALYGHEHFRLQPAYAGSYLVVTAASLDRERIAEYNLTLVAEDRGTPPLRTVRPYTVRVGDENDNAPIFTKPVYEVSVRENNPPGAYLATVAARDPDVGRNGQVTYRLVEAEVGRSGEAVSTYVSVDPATGAIYALRSFDYETLRQLDVRVQASDGGSPQLSSNALVQVRVLDQNDHSPILVHPAPANGSLEVAVPGRSTKDTAVARIQARDADEGANGELAFDLLQQEPREAFSIGRHTGEIMLTGDLSQEPPGRVFKALLVISDGGRPPLTTTATVSFVVTAGGGSAVPASSGSPEHSRPPGSRLAPSGPSLQWDTPLIVIIVLAGSCTLLLAAIIAIATTCNRRKKEVRKGGALREERPGAAGGGASAPGSPDETARGTGPRPNMFDVLTFPGSGKAPFGSPAADAPPPAVAAAEVPGSEGGSATGESACHFEGQQRLRGAHAEPYGASPGFGKEPAAPPVAVWKGHSFNTISGREAEKFSGKDSGKGDSDFNDSDSDISGDALKKDLINHMQSGLWACTAECKILGHSDRCWSPSCAGPNVHPPPHPPAQMSTFCKSTSLPRDPLRRDNYYQAQLPKTVGLQSVYEKVLHRDYDRTVTLLSPPRPGRLPDLQEIGVPLYESPPGSRYVSPKKGINENV.

Residues 1-29 (MSPAKRWGSPCLFPLQLFSLCWVLSVAQS) form the signal peptide. Cadherin domains are found at residues 30–135 (KTVR…APRF), 136–245 (PRAQ…SPAF), 247–354 (QGAV…APEI), 393–497 (QEAG…APIF), 498–609 (TKPV…SPIL), and 615–721 (ANGS…VPAS). Over 30–747 (KTVRYSTFEE…SGPSLQWDTP (718 aa)) the chain is Extracellular. An N-linked (GlcNAc...) asparagine glycan is attached at Asn-616. Low complexity predominate over residues 716-725 (SAVPASSGSP). A disordered region spans residues 716–740 (SAVPASSGSPEHSRPPGSRLAPSGP). The chain crosses the membrane as a helical span at residues 748-768 (LIVIIVLAGSCTLLLAAIIAI). Residues 769–1070 (ATTCNRRKKE…SPKKGINENV (302 aa)) lie on the Cytoplasmic side of the membrane. 3 disordered regions span residues 777–859 (KEVR…TGES), 906–928 (REAE…DSDS), and 1046–1070 (IGVP…NENV). 2 stretches are compositionally biased toward basic and acidic residues: residues 780–790 (RKGGALREERP) and 906–921 (REAE…KGDS). Residue Ser-1053 is modified to Phosphoserine.

As to quaternary structure, the N-terminal extracellular domain forms homophilic interactions; these interactions activate p38 MAPK via TAOK2 and trigger endocytosis. Interacts with CDH2; this interaction may lead to CDH2 cointernalization. Interacts with CDH11. Interacts with TAOK2.

The protein resides in the cell membrane. Its subcellular location is the cell projection. The protein localises to the dendrite. It is found in the presynaptic cell membrane. It localises to the postsynaptic cell membrane. Calcium-dependent cell-adhesion protein. May play a role in activity-induced synaptic reorganization underlying long term memory. Could be involved in CDH2 internalization through TAOK2/p38 MAPK pathway. In hippocampal neurons, may play a role in the down-regulation of dendritic spines, maybe through its action on CDH2 endocytosis. The chain is Protocadherin-8 (Pcdh8) from Mus musculus (Mouse).